Reading from the N-terminus, the 484-residue chain is Glutamate--tRNA ligase (484 aa).

The 'HIGH' region motif lies at 11–21 (PSPTGYLHIGN). Residues 252–256 (KLSKR) carry the 'KMSKS' region motif. An ATP-binding site is contributed by Lys-255.

The protein belongs to the class-I aminoacyl-tRNA synthetase family. Glutamate--tRNA ligase type 1 subfamily. Monomer.

Its subcellular location is the cytoplasm. The enzyme catalyses tRNA(Glu) + L-glutamate + ATP = L-glutamyl-tRNA(Glu) + AMP + diphosphate. Its function is as follows. Catalyzes the attachment of glutamate to tRNA(Glu) in a two-step reaction: glutamate is first activated by ATP to form Glu-AMP and then transferred to the acceptor end of tRNA(Glu). This Staphylococcus aureus (strain COL) protein is Glutamate--tRNA ligase.